Consider the following 376-residue polypeptide: MVLESTMVCVDNSEYMRNGDFLPTRLQAQQDAVNIVCHSKTRSNPENNVGLITLANDCEVLTTLTPDTGRILSKLHTVQPKGKITFCTGIRVAHLALKHRQGKNHKMRIIAFVGSPVEDNEKDLVKLAKRLKKEKVNVDIINFGEEEVNTEKLTAFVNTLNGKDGTGSHLVTVPPGPSLADALISSPILAGEGGAMLGLGASDFEFGVDPSADPELALALRVSMEEQRQRQEEEARRAAAASAAEAGIATPGTEDSDDALLKMTINQQEFGRPGLPDLSSMTEEEQIAYAMQMSLQGTEFSQESADMDASSAMDTSDPVKEEDDYDVMQDPEFLQSVLENLPGVDPNNAAIRSVMGALASQATKDGKNDKKEEEKK.

One can recognise a VWFA domain in the interval 5 to 188 (STMVCVDNSE…LADALISSPI (184 aa)). Lys-122 is covalently cross-linked (Glycyl lysine isopeptide (Lys-Gly) (interchain with G-Cter in SUMO2)). The interaction with UBQLN1 stretch occupies residues 197–262 (LGLGASDFEF…TEDSDDALLK (66 aa)). The UIM 1 domain occupies 211–230 (SADPELALALRVSMEEQRQR). The segment covering 224 to 237 (MEEQRQRQEEEARR) has biased composition (basic and acidic residues). A disordered region spans residues 224–257 (MEEQRQRQEEEARRAAAASAAEAGIATPGTEDSD). A phosphothreonine mark is found at Thr-250 and Thr-253. A phosphoserine mark is found at Ser-256 and Ala-259. The 20-residue stretch at 282 to 301 (TEEEQIAYAMQMSLQGTEFS) folds into the UIM 2 domain. The disordered stretch occupies residues 355 to 376 (MGALASQATKDGKNDKKEEEKK). The residue at position 360 (Ser-360) is a Phosphoserine. A compositionally biased stretch (basic and acidic residues) spans 364–376 (KDGKNDKKEEEKK).

Belongs to the proteasome subunit S5A family. In terms of assembly, component of the 19S proteasome regulatory particle complex. The 26S proteasome consists of a 20S core particle (CP) and two 19S regulatory subunits (RP). The regulatory particle is made of a lid composed of 9 subunits, a base containing 6 ATPases and few additional components including PSMD4. Interacts with NUB1. Interacts with SQSTM1. Interacts with UBQLN4. Interacts with UBE3A. Interacts with UBQLN1 (via ubiquitin-like domain). Interacts with DDI2. Isoform Rpn10A is ubiquitous whereas isoform Rpn10E is mostly expressed in the embryonic brain.

In terms of biological role, component of the 26S proteasome, a multiprotein complex involved in the ATP-dependent degradation of ubiquitinated proteins. This complex plays a key role in the maintenance of protein homeostasis by removing misfolded or damaged proteins, which could impair cellular functions, and by removing proteins whose functions are no longer required. Therefore, the proteasome participates in numerous cellular processes, including cell cycle progression, apoptosis, or DNA damage repair. PSMD4 acts as an ubiquitin receptor subunit through ubiquitin-interacting motifs and selects ubiquitin-conjugates for destruction. Displays a preferred selectivity for longer polyubiquitin chains. This is 26S proteasome non-ATPase regulatory subunit 4 (Psmd4) from Mus musculus (Mouse).